Consider the following 262-residue polypeptide: Alpha-tubulin N-acetyltransferase 1 (262 aa).

An N-acetyltransferase domain is found at 1–177 (MQVDADLRPI…TNFVVFEELF (177 aa)). 111-124 (FYVHFSCQRQGVGQ) serves as a coordination point for acetyl-CoA.

The protein belongs to the acetyltransferase ATAT1 family. In terms of tissue distribution, expressed solely in touch receptor neurons.

It carries out the reaction L-lysyl-[alpha-tubulin] + acetyl-CoA = N(6)-acetyl-L-lysyl-[alpha-tubulin] + CoA + H(+). Specifically acetylates 'Lys-40' in alpha-tubulin/mec-12 on the lumenal side of microtubules. Promotes microtubule destabilization and accelerates microtubule dynamics; this activity may be independent of acetylation activity. Acetylates alpha-tubulin with a slow enzymatic rate, due to a catalytic site that is not optimized for acetyl transfer. Enters the microtubule through each end and diffuses quickly throughout the lumen of microtubules. Acetylates only long/old microtubules because of its slow acetylation rate since it does not have time to act on dynamically unstable microtubules before the enzyme is released. Required for the maintenance of touch receptor neurons and possibly other type of neurons involved in locomotion. Regulates the number and localization of mitochondria in mechanosensory neurons. Plays a role in axonal transport. This is Alpha-tubulin N-acetyltransferase 1 from Caenorhabditis elegans.